The sequence spans 370 residues: Cell division protein DivIB (370 aa).

The segment at 1–65 is disordered; that stretch reads MKKKKDEELT…SNKKGTKRIV (65 aa). Over 1 to 74 the chain is Cytoplasmic; that stretch reads MKKKKDEELT…VKEQRLSRQK (74 aa). 2 stretches are compositionally biased toward basic residues: residues 25 to 34 and 47 to 63; these read SRFKRKRKAT and RNNR…GTKR. A helical transmembrane segment spans residues 75-95; that stretch reads LGILIGSTLIVIALFFGYFYS. Topologically, residues 96–370 are extracellular; it reads SISRVQKFSV…STVNTQQDID (275 aa). The 72-residue stretch at 98-169 folds into the POTRA domain; that stretch reads SRVQKFSVSG…GKVKIKVKEN (72 aa). Residues 295–370 form a disordered region; sequence SGWTDEAKAA…STVNTQQDID (76 aa). Composition is skewed to low complexity over residues 304-314 and 327-342; these read ASESSKSAESS and SESA…STET. Polar residues predominate over residues 356 to 370; it reads SSNAESTVNTQQDID.

This sequence belongs to the FtsQ/DivIB family. DivIB subfamily.

The protein resides in the cell membrane. Functionally, cell division protein that may be involved in stabilizing or promoting the assembly of the division complex. The sequence is that of Cell division protein DivIB from Pediococcus pentosaceus (strain ATCC 25745 / CCUG 21536 / LMG 10740 / 183-1w).